Consider the following 210-residue polypeptide: Somatotropin (210 aa).

The N-terminal stretch at 1-22 (MAKALVLLSLVLVSVFVNNGTA) is a signal peptide. His38 serves as a coordination point for Zn(2+). A disulfide bond links Cys71 and Cys183. Residue Glu192 participates in Zn(2+) binding. Cysteines 200 and 208 form a disulfide.

Belongs to the somatotropin/prolactin family.

Its subcellular location is the secreted. Growth hormone plays an important role in growth control and is involved in the regulation of several anabolic processes. Implicated as an osmoregulatory substance important for seawater adaptation. The protein is Somatotropin (gh) of Misgurnus mizolepis (Chinese weatherloach).